The chain runs to 298 residues: tRNA dimethylallyltransferase (298 aa).

ATP is bound at residue 10–17 (GPTASGKT). Position 12 to 17 (12 to 17 (TASGKT)) interacts with substrate. Positions 35-38 (DSMC) are interaction with substrate tRNA.

This sequence belongs to the IPP transferase family. As to quaternary structure, monomer. Mg(2+) is required as a cofactor.

It catalyses the reaction adenosine(37) in tRNA + dimethylallyl diphosphate = N(6)-dimethylallyladenosine(37) in tRNA + diphosphate. In terms of biological role, catalyzes the transfer of a dimethylallyl group onto the adenine at position 37 in tRNAs that read codons beginning with uridine, leading to the formation of N6-(dimethylallyl)adenosine (i(6)A). This is tRNA dimethylallyltransferase from Hydrogenobaculum sp. (strain Y04AAS1).